A 234-amino-acid chain; its full sequence is Small ribosomal subunit protein eS4 (234 aa).

In terms of domain architecture, S4 RNA-binding spans 37-99; sequence VPLLIVLRDV…REEYYRVFPG (63 aa).

Belongs to the eukaryotic ribosomal protein eS4 family.

The protein is Small ribosomal subunit protein eS4 (rps4e) of Haloarcula marismortui (strain ATCC 43049 / DSM 3752 / JCM 8966 / VKM B-1809) (Halobacterium marismortui).